We begin with the raw amino-acid sequence, 209 residues long: 3-demethoxyubiquinol 3-hydroxylase (209 aa).

Positions 58, 88, 91, 140, 172, and 175 each coordinate Fe cation.

It belongs to the COQ7 family. Fe cation serves as cofactor.

The protein localises to the cell membrane. The catalysed reaction is a 5-methoxy-2-methyl-3-(all-trans-polyprenyl)benzene-1,4-diol + AH2 + O2 = a 3-demethylubiquinol + A + H2O. The protein operates within cofactor biosynthesis; ubiquinone biosynthesis. In terms of biological role, catalyzes the hydroxylation of 2-nonaprenyl-3-methyl-6-methoxy-1,4-benzoquinol during ubiquinone biosynthesis. In Polynucleobacter necessarius subsp. necessarius (strain STIR1), this protein is 3-demethoxyubiquinol 3-hydroxylase.